Consider the following 761-residue polypeptide: Spindle assembly abnormal protein 4 (761 aa).

Over residues 1–11 (MLPSENGDEDQ) the composition is skewed to acidic residues. Residues 1–109 (MLPSENGDED…SNERREEDNV (109 aa)) form a disordered region. Positions 51–62 (TPTNSAPSSART) are enriched in polar residues. Basic and acidic residues predominate over residues 90-106 (ESHDSGNRSESNERREE). A coiled-coil region spans residues 129–156 (ETCSKVSEEATQLRAEADRITAQANFIN). Residues 164–173 (TPSSYSSNIS) are compositionally biased toward low complexity. 2 disordered regions span residues 164–228 (TPSS…QARP) and 252–280 (PRRQ…SEHV). A compositionally biased stretch (polar residues) spans 210 to 223 (QTLSSLASSGSLDT). Residues 265-280 (SQKENVPERKAPSEHV) show a composition bias toward basic and acidic residues. Positions 326–464 (RKKQEEAYAK…EKDDREKEMF (139 aa)) form a coiled coil. Residues 479 to 497 (ATGSAASSRLPSVSSLASS) show a composition bias toward low complexity. The tract at residues 479-510 (ATGSAASSRLPSVSSLASSMKTGSTGKGRTVS) is disordered.

It is found in the cytoplasm. It localises to the cytoskeleton. The protein localises to the microtubule organizing center. The protein resides in the centrosome. In terms of biological role, required for centrosome duplication. Plays a central role in determining centrosome size. This Caenorhabditis briggsae protein is Spindle assembly abnormal protein 4 (sas-4).